The primary structure comprises 90 residues: Lantipeptide prochlorosin 1.7 (90 aa).

Positions 1-68 (MSEEQLKAFI…DAELEGVAGG (68 aa)) are excised as a propeptide. A 2,3-didehydrobutyrine mark is found at T69 and T73. The lanthionine (Ser-Cys) cross-link spans 76-79 (SITC). Cross-links (beta-methyllanthionine (Thr-Cys)) lie at residues 78–82 (TCETC) and 81–90 (TCDLLVGKMC).

In terms of processing, cross-links are proved in vitro, when coepressed in E.coli with the ProcM lanthionine synthetase. The lanthionine residue has a DL configuration (with 2S,6R stereochemistry), whereas the beta-methyllanthionine residues have a DL configuration (with 2S,3S,6R stereochemistry). Post-translationally, maturation of prochlorosin involves the enzymatic conversion of Thr, and Ser into dehydrated AA and the formation of thioether bonds with cysteines. This is followed by membrane translocation and cleavage of the modified precursor.

Its subcellular location is the secreted. Functionally, lanthionine-containing peptide (lantipeptide) with unknown function. Does not show antibiotic activity against Lactococcus lactis 117 and Bacillus subtilis 6633 bacteria. Organisms that produce this peptide live in oligotrophic environments at very dilute concentrations, suggesting this peptide is not secreted to influence other bacteria. The chain is Lantipeptide prochlorosin 1.7 from Prochlorococcus marinus (strain MIT 9313).